Here is a 166-residue protein sequence, read N- to C-terminus: Lipoprotein signal peptidase (166 aa).

3 helical membrane-spanning segments follow: residues 12–32, 70–90, and 102–122; these read WLWLVVVVLIIDLGSKYLILQ, WFFAGIAIGICVILLVMMYRS, and ALIIGGALGNLFDRLWHGFVV. Active-site residues include Asp-123 and Asp-141. A helical membrane pass occupies residues 137–157; it reads FNLADTAICIGAALIVLEGFL.

Belongs to the peptidase A8 family.

It is found in the cell inner membrane. It carries out the reaction Release of signal peptides from bacterial membrane prolipoproteins. Hydrolyzes -Xaa-Yaa-Zaa-|-(S,diacylglyceryl)Cys-, in which Xaa is hydrophobic (preferably Leu), and Yaa (Ala or Ser) and Zaa (Gly or Ala) have small, neutral side chains.. It participates in protein modification; lipoprotein biosynthesis (signal peptide cleavage). Functionally, this protein specifically catalyzes the removal of signal peptides from prolipoproteins. The chain is Lipoprotein signal peptidase from Salmonella paratyphi A (strain ATCC 9150 / SARB42).